A 27-amino-acid chain; its full sequence is Voltage-dependent anion-selective channel protein (27 aa).

It belongs to the eukaryotic mitochondrial porin family. As to quaternary structure, interacts with hexokinases. In terms of tissue distribution, photoreceptors.

It localises to the mitochondrion outer membrane. Forms a channel through the cell membrane that allows diffusion of small hydrophilic molecules. This Doryteuthis pealeii (Longfin inshore squid) protein is Voltage-dependent anion-selective channel protein.